Consider the following 728-residue polypeptide: Propionyl-CoA carboxylase alpha chain, mitochondrial (728 aa).

A mitochondrion-targeting transit peptide spans 1–52; that stretch reads MAGFWVGTAPLVAAGRRGRWPPQQLMLSAALRTLKHVLYYSRQCLMVSRNLG. The region spanning 62–509 is the Biotin carboxylation domain; the sequence is TFDKILVANR…STKFLSDVYP (448 aa). Lysine 65 carries the N6-acetyllysine; alternate modification. Lysine 65 carries the post-translational modification N6-succinyllysine; alternate. Lysine 119 carries the post-translational modification N6-succinyllysine. Residue lysine 150 is modified to N6-acetyllysine; alternate. The residue at position 150 (lysine 150) is an N6-succinyllysine; alternate. Lysine 177 lines the ATP pocket. An ATP-grasp domain is found at 181–378; that stretch reads KLLAKKAEVN…LVQEMIRVAK (198 aa). Position 200 is an N6-acetyllysine; alternate (lysine 200). The residue at position 200 (lysine 200) is an N6-succinyllysine; alternate. ATP is bound by residues 209-270, glutamate 261, and asparagine 296; that span reads AREI…PRHI. Serine 252 is subject to Phosphoserine. Lysine 262 is subject to N6-succinyllysine. Lysine 328 bears the N6-acetyllysine; alternate mark. Lysine 328 is modified (N6-succinyllysine; alternate). Glutamate 336, glutamate 349, and asparagine 351 together coordinate Mg(2+). Mn(2+)-binding residues include glutamate 336, glutamate 349, and asparagine 351. Residue glutamate 349 is part of the active site. Residues lysine 385 and lysine 407 each carry the N6-succinyllysine modification. Position 409 (phenylalanine 409) interacts with biotin. An N6-acetyllysine modification is found at lysine 496. N6-succinyllysine is present on residues lysine 502, lysine 513, and lysine 648. In terms of domain architecture, Biotinyl-binding spans 653–728; it reads KVTEDTSSVL…GEGDLLVELE (76 aa). Lysine 694 is subject to N6-biotinyllysine; by HLCS.

In terms of assembly, the holoenzyme is a dodecamer composed of 6 PCCA/alpha subunits and 6 PCCB/beta subunits. Interacts (via the biotin carboxylation domain) with SIRT4. Interacts with SIRT3 and SIRT5. The cofactor is Mg(2+). Requires Mn(2+) as cofactor. Biotin is required as a cofactor. Acetylated. Post-translationally, the biotin cofactor is covalently attached to the C-terminal biotinyl-binding domain and is required for the catalytic activity. Biotinylation is catalyzed by HLCS.

It is found in the mitochondrion matrix. The catalysed reaction is propanoyl-CoA + hydrogencarbonate + ATP = (S)-methylmalonyl-CoA + ADP + phosphate + H(+). It carries out the reaction butanoyl-CoA + hydrogencarbonate + ATP = (2S)-ethylmalonyl-CoA + ADP + phosphate + H(+). It functions in the pathway metabolic intermediate metabolism; propanoyl-CoA degradation; succinyl-CoA from propanoyl-CoA: step 1/3. This is one of the 2 subunits of the biotin-dependent propionyl-CoA carboxylase (PCC), a mitochondrial enzyme involved in the catabolism of odd chain fatty acids, branched-chain amino acids isoleucine, threonine, methionine, and valine and other metabolites. Propionyl-CoA carboxylase catalyzes the carboxylation of propionyl-CoA/propanoyl-CoA to D-methylmalonyl-CoA/(S)-methylmalonyl-CoA. Within the holoenzyme, the alpha subunit catalyzes the ATP-dependent carboxylation of the biotin carried by the biotin carboxyl carrier (BCC) domain, while the beta subunit then transfers the carboxyl group from carboxylated biotin to propionyl-CoA. Propionyl-CoA carboxylase also significantly acts on butyryl-CoA/butanoyl-CoA, which is converted to ethylmalonyl-CoA/(2S)-ethylmalonyl-CoA at a much lower rate. Other alternative minor substrates include (2E)-butenoyl-CoA/crotonoyl-CoA. The chain is Propionyl-CoA carboxylase alpha chain, mitochondrial from Homo sapiens (Human).